Reading from the N-terminus, the 487-residue chain is Glutamyl-tRNA(Gln) amidotransferase subunit A (487 aa).

Residues lysine 78 and serine 153 each act as charge relay system in the active site. The active-site Acyl-ester intermediate is the serine 177.

This sequence belongs to the amidase family. GatA subfamily. As to quaternary structure, heterotrimer of A, B and C subunits.

The catalysed reaction is L-glutamyl-tRNA(Gln) + L-glutamine + ATP + H2O = L-glutaminyl-tRNA(Gln) + L-glutamate + ADP + phosphate + H(+). Functionally, allows the formation of correctly charged Gln-tRNA(Gln) through the transamidation of misacylated Glu-tRNA(Gln) in organisms which lack glutaminyl-tRNA synthetase. The reaction takes place in the presence of glutamine and ATP through an activated gamma-phospho-Glu-tRNA(Gln). The protein is Glutamyl-tRNA(Gln) amidotransferase subunit A of Oenococcus oeni (strain ATCC BAA-331 / PSU-1).